Reading from the N-terminus, the 197-residue chain is Probable GTP-binding protein EngB (197 aa).

The EngB-type G domain occupies 22–195; it reads ELPEVALAGR…WKAIYALITE (174 aa). Residues 30–37, 57–61, 75–78, 142–145, and 174–176 contribute to the GTP site; these read GRSNVGKS, GKTQT, DVPG, TKLD, and FSA. Residues Ser-37 and Thr-59 each contribute to the Mg(2+) site.

It belongs to the TRAFAC class TrmE-Era-EngA-EngB-Septin-like GTPase superfamily. EngB GTPase family. It depends on Mg(2+) as a cofactor.

Necessary for normal cell division and for the maintenance of normal septation. The chain is Probable GTP-binding protein EngB from Exiguobacterium sp. (strain ATCC BAA-1283 / AT1b).